We begin with the raw amino-acid sequence, 435 residues long: Trigger factor (435 aa).

Residues 125-147 form a disordered region; the sequence is MEVPEQDTSVSDADVDSELENKR. The PPIase FKBP-type domain occupies 164–249; it reads GDTVVIDYEG…IHEVKEKQLP (86 aa).

This sequence belongs to the FKBP-type PPIase family. Tig subfamily.

It is found in the cytoplasm. It catalyses the reaction [protein]-peptidylproline (omega=180) = [protein]-peptidylproline (omega=0). Involved in protein export. Acts as a chaperone by maintaining the newly synthesized protein in an open conformation. Functions as a peptidyl-prolyl cis-trans isomerase. The sequence is that of Trigger factor from Limosilactobacillus fermentum (strain NBRC 3956 / LMG 18251) (Lactobacillus fermentum).